We begin with the raw amino-acid sequence, 568 residues long: Pre-mRNA-processing protein 45 (568 aa).

Disordered stretches follow at residues 199 to 232, 281 to 449, and 545 to 568; these read EPPK…AQDQ, LNQN…QQKI, and AGKG…RDEE. Residues 286-364 show a composition bias toward basic and acidic residues; it reads KTMRDDIGKR…SRDGDSDRSL (79 aa). Positions 365 to 379 are enriched in low complexity; sequence SRSLSASDRSYSRSR. 3 stretches are compositionally biased toward basic and acidic residues: residues 395–419, 426–440, and 557–568; these read RSPE…LERA, ERLE…DLRL, and RDGPVRFVRDEE.

This sequence belongs to the SNW family. As to quaternary structure, associated with the spliceosome.

Its subcellular location is the nucleus. Involved in pre-mRNA splicing. This chain is Pre-mRNA-processing protein 45 (PRP45), found in Yarrowia lipolytica (strain CLIB 122 / E 150) (Yeast).